A 477-amino-acid polypeptide reads, in one-letter code: UDP-N-acetylmuramate--L-alanine ligase (477 aa).

An ATP-binding site is contributed by 120–126 (GSHGKTT).

The protein belongs to the MurCDEF family.

It is found in the cytoplasm. It catalyses the reaction UDP-N-acetyl-alpha-D-muramate + L-alanine + ATP = UDP-N-acetyl-alpha-D-muramoyl-L-alanine + ADP + phosphate + H(+). The protein operates within cell wall biogenesis; peptidoglycan biosynthesis. Its function is as follows. Cell wall formation. This is UDP-N-acetylmuramate--L-alanine ligase from Rickettsia canadensis (strain McKiel).